A 267-amino-acid polypeptide reads, in one-letter code: Acyl-[acyl-carrier-protein]--UDP-N-acetylglucosamine O-acyltransferase (267 aa).

It belongs to the transferase hexapeptide repeat family. LpxA subfamily. In terms of assembly, homotrimer.

It is found in the cytoplasm. The catalysed reaction is a (3R)-hydroxyacyl-[ACP] + UDP-N-acetyl-alpha-D-glucosamine = a UDP-3-O-[(3R)-3-hydroxyacyl]-N-acetyl-alpha-D-glucosamine + holo-[ACP]. It participates in glycolipid biosynthesis; lipid IV(A) biosynthesis; lipid IV(A) from (3R)-3-hydroxytetradecanoyl-[acyl-carrier-protein] and UDP-N-acetyl-alpha-D-glucosamine: step 1/6. Functionally, involved in the biosynthesis of lipid A, a phosphorylated glycolipid that anchors the lipopolysaccharide to the outer membrane of the cell. In Cupriavidus pinatubonensis (strain JMP 134 / LMG 1197) (Cupriavidus necator (strain JMP 134)), this protein is Acyl-[acyl-carrier-protein]--UDP-N-acetylglucosamine O-acyltransferase.